A 286-amino-acid polypeptide reads, in one-letter code: Ribosomal RNA small subunit methyltransferase H (286 aa).

S-adenosyl-L-methionine-binding positions include 30-32 (GGH), D49, F88, D97, and Q104. Residues 260–286 (HPLQPSDEESFNNPASRSAKLRALEMR) are disordered.

Belongs to the methyltransferase superfamily. RsmH family.

It localises to the cytoplasm. It catalyses the reaction cytidine(1402) in 16S rRNA + S-adenosyl-L-methionine = N(4)-methylcytidine(1402) in 16S rRNA + S-adenosyl-L-homocysteine + H(+). Functionally, specifically methylates the N4 position of cytidine in position 1402 (C1402) of 16S rRNA. The chain is Ribosomal RNA small subunit methyltransferase H from Solibacter usitatus (strain Ellin6076).